Here is a 754-residue protein sequence, read N- to C-terminus: Polycomb protein mes-3 (754 aa).

Residues 1 to 83 (MTPATAEVKV…PTKLENIQKT (83 aa)) are disordered. The segment covering 31–40 (ARREEEKENL) has biased composition (basic and acidic residues). The segment covering 51-61 (SSEAGSSRESS) has biased composition (low complexity).

In terms of assembly, forms a heterotrimeric complex with the Polycomb proteins mes-2 and mes-3. Does not interact with mes-4. Interacts with nyfa-1. In adults, it is predominantly expressed in the germline, and weakly expressed in intestinal cells.

It localises to the nucleus. In terms of biological role, component of a Polycomb group (PcG) complex. PcG proteins act by forming multiprotein complexes, which are required to maintain the transcriptionally repressive state of homeotic genes throughout development. In association with the nfya-1-NF-Y complex, may play a role in repressing the expression of the homeobox protein egl-5 in tissues such as the head. PcG proteins are not required to initiate repression, but to maintain it during later stages of development. The mes-2/mes-3/mes-6 complex may participate in the global inactivation of the X chromosomes in germline cells. The complex may act via methylation of histone H3 'Lys-27', rendering chromatin heritably changed in its expressibility. This complex is required to exclude mes-4 from the inactivated X-chromosomes in germline cells. The chain is Polycomb protein mes-3 from Caenorhabditis elegans.